The following is a 393-amino-acid chain: Acetylornithine aminotransferase (393 aa).

Residues 100 to 101 (GT) and F132 each bind pyridoxal 5'-phosphate. R135 is a N(2)-acetyl-L-ornithine binding site. Position 217-220 (217-220 (DEIQ)) interacts with pyridoxal 5'-phosphate. K246 bears the N6-(pyridoxal phosphate)lysine mark. S275 lines the N(2)-acetyl-L-ornithine pocket. T276 serves as a coordination point for pyridoxal 5'-phosphate.

The protein belongs to the class-III pyridoxal-phosphate-dependent aminotransferase family. ArgD subfamily. As to quaternary structure, homodimer. Pyridoxal 5'-phosphate is required as a cofactor.

Its subcellular location is the cytoplasm. It catalyses the reaction N(2)-acetyl-L-ornithine + 2-oxoglutarate = N-acetyl-L-glutamate 5-semialdehyde + L-glutamate. It participates in amino-acid biosynthesis; L-arginine biosynthesis; N(2)-acetyl-L-ornithine from L-glutamate: step 4/4. This chain is Acetylornithine aminotransferase, found in Campylobacter jejuni subsp. jejuni serotype O:2 (strain ATCC 700819 / NCTC 11168).